Reading from the N-terminus, the 355-residue chain is Glutamyl aminopeptidase (355 aa).

2 residues coordinate a divalent metal cation: His65 and Asp181. Glu213 serves as the catalytic Proton acceptor. Residues Glu214, Asp236, and His319 each contribute to the a divalent metal cation site.

The protein belongs to the peptidase M42 family. A divalent metal cation serves as cofactor.

It catalyses the reaction Release of N-terminal glutamate (and to a lesser extent aspartate) from a peptide.. The polypeptide is Glutamyl aminopeptidase (pepA) (Lactococcus lactis subsp. cremoris (strain MG1363)).